The primary structure comprises 467 residues: Asparagine--tRNA ligase (467 aa).

Belongs to the class-II aminoacyl-tRNA synthetase family. Homodimer.

The protein resides in the cytoplasm. It catalyses the reaction tRNA(Asn) + L-asparagine + ATP = L-asparaginyl-tRNA(Asn) + AMP + diphosphate + H(+). The protein is Asparagine--tRNA ligase of Pasteurella multocida (strain Pm70).